The primary structure comprises 325 residues: 4-hydroxy-3-methylbut-2-enyl diphosphate reductase (325 aa).

C13 is a [4Fe-4S] cluster binding site. The (2E)-4-hydroxy-3-methylbut-2-enyl diphosphate site is built by H42 and H76. 2 residues coordinate dimethylallyl diphosphate: H42 and H76. Isopentenyl diphosphate contacts are provided by H42 and H76. A [4Fe-4S] cluster-binding site is contributed by C98. Residue H126 participates in (2E)-4-hydroxy-3-methylbut-2-enyl diphosphate binding. H126 contacts dimethylallyl diphosphate. Position 126 (H126) interacts with isopentenyl diphosphate. The Proton donor role is filled by E128. Residue T169 coordinates (2E)-4-hydroxy-3-methylbut-2-enyl diphosphate. A [4Fe-4S] cluster-binding site is contributed by C230. Residues S258, S259, N260, and S306 each contribute to the (2E)-4-hydroxy-3-methylbut-2-enyl diphosphate site. Dimethylallyl diphosphate-binding residues include S258, S259, N260, and S306. Residues S258, S259, N260, and S306 each contribute to the isopentenyl diphosphate site.

The protein belongs to the IspH family. [4Fe-4S] cluster is required as a cofactor.

The catalysed reaction is isopentenyl diphosphate + 2 oxidized [2Fe-2S]-[ferredoxin] + H2O = (2E)-4-hydroxy-3-methylbut-2-enyl diphosphate + 2 reduced [2Fe-2S]-[ferredoxin] + 2 H(+). It carries out the reaction dimethylallyl diphosphate + 2 oxidized [2Fe-2S]-[ferredoxin] + H2O = (2E)-4-hydroxy-3-methylbut-2-enyl diphosphate + 2 reduced [2Fe-2S]-[ferredoxin] + 2 H(+). It participates in isoprenoid biosynthesis; dimethylallyl diphosphate biosynthesis; dimethylallyl diphosphate from (2E)-4-hydroxy-3-methylbutenyl diphosphate: step 1/1. It functions in the pathway isoprenoid biosynthesis; isopentenyl diphosphate biosynthesis via DXP pathway; isopentenyl diphosphate from 1-deoxy-D-xylulose 5-phosphate: step 6/6. Catalyzes the conversion of 1-hydroxy-2-methyl-2-(E)-butenyl 4-diphosphate (HMBPP) into a mixture of isopentenyl diphosphate (IPP) and dimethylallyl diphosphate (DMAPP). Acts in the terminal step of the DOXP/MEP pathway for isoprenoid precursor biosynthesis. The protein is 4-hydroxy-3-methylbut-2-enyl diphosphate reductase of Prosthecochloris aestuarii (strain DSM 271 / SK 413).